Consider the following 235-residue polypeptide: Aspartate/glutamate leucyltransferase (235 aa).

This sequence belongs to the R-transferase family. Bpt subfamily.

The protein localises to the cytoplasm. It catalyses the reaction N-terminal L-glutamyl-[protein] + L-leucyl-tRNA(Leu) = N-terminal L-leucyl-L-glutamyl-[protein] + tRNA(Leu) + H(+). It carries out the reaction N-terminal L-aspartyl-[protein] + L-leucyl-tRNA(Leu) = N-terminal L-leucyl-L-aspartyl-[protein] + tRNA(Leu) + H(+). Functionally, functions in the N-end rule pathway of protein degradation where it conjugates Leu from its aminoacyl-tRNA to the N-termini of proteins containing an N-terminal aspartate or glutamate. This is Aspartate/glutamate leucyltransferase from Pseudomonas fluorescens (strain ATCC BAA-477 / NRRL B-23932 / Pf-5).